The primary structure comprises 77 residues: Large ribosomal subunit protein bL28 (77 aa).

A disordered region spans residues 1–21 (MARVCKVTGKRPMTGNNVSHA).

The protein belongs to the bacterial ribosomal protein bL28 family.

The protein is Large ribosomal subunit protein bL28 of Chromobacterium violaceum (strain ATCC 12472 / DSM 30191 / JCM 1249 / CCUG 213 / NBRC 12614 / NCIMB 9131 / NCTC 9757 / MK).